The sequence spans 1713 residues: uncharacterized protein (1713 aa).

The span at 1-12 (MNENEFSTNSLI) shows a compositional bias: polar residues. Disordered stretches follow at residues 1 to 35 (MNEN…INFG), 79 to 200 (QQLN…KLSN), 226 to 290 (GNNN…QPLS), 309 to 557 (QYLS…PMSH), 713 to 734 (SNDQ…KKDR), 808 to 952 (SPPM…SITT), and 1143 to 1190 (HHHH…SISR). Low complexity-rich tracts occupy residues 13–35 (NQQG…INFG), 79–109 (QQLN…NNNN), 126–170 (NNSG…NSGN), 177–200 (NMSD…KLSN), and 226–264 (GNNN…GGNN). Positions 265–276 (SHHHHNHSHHNS) are enriched in basic residues. Composition is skewed to low complexity over residues 317–470 (NNIN…SPAS) and 478–489 (SNNFGGNHNNYN). The span at 490–504 (HAHHSHHNNHAHHNT) shows a compositional bias: basic residues. A compositionally biased stretch (low complexity) spans 505–553 (HNYNNNNNNNNNNNNNNNNNNNNSNNSNNNSNTNNNGNNGNNSNNNNNH). Positions 544-825 (GNNSNNNNNH…QNPGRFLNHD (282 aa)) form a DNA-binding region, NDT80. The segment covering 822–832 (LNHDKSLKKDP) has biased composition (basic and acidic residues). The span at 838–874 (GGKGGGGSGSGGMGGGMGGGMGNNGSSGSSSNGGYGN) shows a compositional bias: gly residues. Composition is skewed to low complexity over residues 898-946 (SPTT…PTLT) and 1148-1189 (QQQQ…SSIS). Residues 1240 to 1355 (SDQRIKSNIR…RSLKKEKDHI (116 aa)) form the Peptidase S74 domain. 3 consecutive transmembrane segments (helical) span residues 1416-1436 (TMFV…FYLF), 1447-1467 (LMNF…TFYV), and 1473-1493 (LIIA…VGFF). A compositionally biased stretch (low complexity) spans 1596 to 1605 (NSNNNINNNN). Disordered regions lie at residues 1596–1634 (NSNN…DFHE) and 1646–1665 (IKGK…SSSN). Residues 1617-1634 (FIDDFKKSSSNNHKDFHE) are compositionally biased toward basic and acidic residues.

The protein localises to the membrane. This is an uncharacterized protein from Dictyostelium discoideum (Social amoeba).